A 395-amino-acid polypeptide reads, in one-letter code: General transcription factor IIH subunit 2 (395 aa).

The 177-residue stretch at His-60 to Val-236 folds into the VWFA domain. Tyr-95 carries the phosphotyrosine modification. The segment at Cys-291 to Cys-308 adopts a C4-type zinc-finger fold.

It belongs to the GTF2H2 family. As to quaternary structure, component of the TFIID-containing RNA polymerase II pre-initiation complex that is composed of TBP and at least GTF2A1, GTF2A2, GTF2E1, GTF2E2, GTF2F1, GTF2H2, GTF2H3, GTF2H4, GTF2H5, GTF2B, TCEA1, ERCC2 and ERCC3. Component of the 7-subunit TFIIH core complex composed of XPB/ERCC3, XPD/ERCC2, GTF2H1, GTF2H2, GTF2H3, GTF2H4 and GTF2H5, which is active in NER. The core complex associates with the 3-subunit CDK-activating kinase (CAK) module composed of CCNH/cyclin H, CDK7 and MNAT1 to form the 10-subunit holoenzyme (holo-TFIIH) active in transcription. Interacts with XPB, XPD, GTF2H1 and GTF2H3. In terms of assembly, (Microbial infection) Interacts with varicella-zoster virus IE63 protein. As to expression, widely expressed, with higher expression in skeletal muscle.

The protein localises to the nucleus. Functionally, component of the general transcription and DNA repair factor IIH (TFIIH) core complex, which is involved in general and transcription-coupled nucleotide excision repair (NER) of damaged DNA and, when complexed to CAK, in RNA transcription by RNA polymerase II. In NER, TFIIH acts by opening DNA around the lesion to allow the excision of the damaged oligonucleotide and its replacement by a new DNA fragment. In transcription, TFIIH has an essential role in transcription initiation. When the pre-initiation complex (PIC) has been established, TFIIH is required for promoter opening and promoter escape. Phosphorylation of the C-terminal tail (CTD) of the largest subunit of RNA polymerase II by the kinase module CAK controls the initiation of transcription. The N-terminus of GTF2H2 interacts with and regulates XPD whereas an intact C-terminus is required for a successful escape of RNAP II form the promoter. The polypeptide is General transcription factor IIH subunit 2 (GTF2H2) (Homo sapiens (Human)).